Here is an 820-residue protein sequence, read N- to C-terminus: Trimethylamine-N-oxide reductase (820 aa).

The tat-type signal signal peptide spans 1–33; it reads MAITRRSFLKGVATTSAASVIGPSLLASASANA. Residue serine 179 coordinates Mo-bis(molybdopterin guanine dinucleotide).

The protein belongs to the prokaryotic molybdopterin-containing oxidoreductase family. The cofactor is Mo-bis(molybdopterin guanine dinucleotide). Predicted to be exported by the Tat system. The position of the signal peptide cleavage has not been experimentally proven.

Its subcellular location is the periplasm. It carries out the reaction trimethylamine + 2 Fe(III)-[cytochrome c] + H2O = trimethylamine N-oxide + 2 Fe(II)-[cytochrome c] + 3 H(+). Its function is as follows. Reduces trimethylamine-N-oxide (TMAO) into trimethylamine; an anaerobic reaction coupled to energy-yielding reactions. This chain is Trimethylamine-N-oxide reductase (torA), found in Vibrio parahaemolyticus serotype O3:K6 (strain RIMD 2210633).